We begin with the raw amino-acid sequence, 96 residues long: C-C motif chemokine 20 (96 aa).

An N-terminal signal peptide occupies residues 1 to 26 (MCCTKSLLLAALMSVLLLHLCGESEA). 2 disulfides stabilise this stretch: C32-C58 and C33-C74.

The protein belongs to the intercrine beta (chemokine CC) family. C-terminal processed forms which lack 1, 3 or 6 amino acids are produced by proteolytic cleavage after secretion from peripheral blood monocytes. As to expression, expressed in the seminal plasma, endometrial fluid and follicular fluid (at protein level). Expressed predominantly in the liver, lymph nodes, appendix, peripheral blood lymphocytes, and fetal lung. Low levels seen in thymus, prostate, testis, small intestine and colon.

It localises to the secreted. In terms of biological role, acts as a ligand for C-C chemokine receptor CCR6. Signals through binding and activation of CCR6 and induces a strong chemotactic response and mobilization of intracellular calcium ions. The ligand-receptor pair CCL20-CCR6 is responsible for the chemotaxis of dendritic cells (DC), effector/memory T-cells and B-cells and plays an important role at skin and mucosal surfaces under homeostatic and inflammatory conditions, as well as in pathology, including cancer and various autoimmune diseases. CCL20 acts as a chemotactic factor that attracts lymphocytes and, slightly, neutrophils, but not monocytes. Involved in the recruitment of both the pro-inflammatory IL17 producing helper T-cells (Th17) and the regulatory T-cells (Treg) to sites of inflammation. Required for optimal migration of thymic natural regulatory T cells (nTregs) and DN1 early thymocyte progenitor cells. C-terminal processed forms have been shown to be equally chemotactically active for leukocytes. Positively regulates sperm motility and chemotaxis via its binding to CCR6 which triggers Ca2+ mobilization in the sperm which is important for its motility. Inhibits proliferation of myeloid progenitors in colony formation assays. May be involved in formation and function of the mucosal lymphoid tissues by attracting lymphocytes and dendritic cells towards epithelial cells. Possesses antibacterial activity towards E.coli ATCC 25922 and S.aureus ATCC 29213. In Homo sapiens (Human), this protein is C-C motif chemokine 20 (CCL20).